The chain runs to 225 residues: Golgi to ER traffic protein 1 (225 aa).

Met-1 is a topological domain (lumenal). Residues 2–21 traverse the membrane as a helical segment; it reads NWVIIAALFFVIINKLLQYT. Topologically, residues 22–107 are cytoplasmic; that stretch reads SRYQEAWINK…SQSKLFNRLK (86 aa). Positions 37-104 form a coiled coil; the sequence is DISSLSKEYS…AKDSQSKLFN (68 aa). A helical membrane pass occupies residues 108-128; sequence LLTLTLPFMILKLWKGKFIVY. The Lumenal portion of the chain corresponds to 129–172; it reads DIPTKDTFPVIVNGVLSQGLLYIPLLPINFLRGIDPNKHILVPG. The chain crosses the membrane as a helical span at residues 173–189; the sequence is VSLGIWLMALTKTIDTV. The Cytoplasmic portion of the chain corresponds to 190–225; it reads EFIVKQLVFQPVVSKQVKEKTKEKVVELKTTEAELD.

This sequence belongs to the WRB/GET1 family. Component of the Golgi to ER traffic (GET) complex, which is composed of GET1, GET2 and GET3. Within the complex, GET1 and GET2 form a heterotetramer which is stabilized by phosphatidylinositol binding and which binds to the GET3 homodimer.

The protein localises to the endoplasmic reticulum membrane. The protein resides in the golgi apparatus membrane. Its function is as follows. Required for the post-translational delivery of tail-anchored (TA) proteins to the endoplasmic reticulum. Together with GET2, acts as a membrane receptor for soluble GET3, which recognizes and selectively binds the transmembrane domain of TA proteins in the cytosol. The GET complex cooperates with the HDEL receptor ERD2 to mediate the ATP-dependent retrieval of resident ER proteins that contain a C-terminal H-D-E-L retention signal from the Golgi to the ER. This chain is Golgi to ER traffic protein 1, found in Vanderwaltozyma polyspora (strain ATCC 22028 / DSM 70294 / BCRC 21397 / CBS 2163 / NBRC 10782 / NRRL Y-8283 / UCD 57-17) (Kluyveromyces polysporus).